The primary structure comprises 295 residues: Glycine--tRNA ligase alpha subunit (295 aa).

It belongs to the class-II aminoacyl-tRNA synthetase family. Tetramer of two alpha and two beta subunits.

The protein resides in the cytoplasm. It carries out the reaction tRNA(Gly) + glycine + ATP = glycyl-tRNA(Gly) + AMP + diphosphate. The polypeptide is Glycine--tRNA ligase alpha subunit (Desulforamulus reducens (strain ATCC BAA-1160 / DSM 100696 / MI-1) (Desulfotomaculum reducens)).